Here is a 1247-residue protein sequence, read N- to C-terminus: SAM and SH3 domain-containing protein 1 (1247 aa).

A disordered region spans residues 1–39 (MEDAGAAGPGPEPEPEPEPEPEPAPEPEPEPKPGAGTSE). Over residues 13-28 (PEPEPEPEPEPAPEPE) the composition is skewed to acidic residues. At Ser-90 the chain carries Phosphoserine. Disordered stretches follow at residues 126–145 (VERK…VGKG), 221–257 (AALD…ESVK), and 316–344 (FFDG…LDTW). At Ser-248 the chain carries Phosphoserine. The span at 331 to 343 (SLTTSPSSSSLDT) shows a compositional bias: low complexity. Residue Ser-407 is modified to Phosphoserine. The interval 449-573 (SLGKKVKSVK…DFTPSPYDTD (125 aa)) is disordered. Low complexity-rich tracts occupy residues 468–484 (KYSS…DGMP) and 505–523 (GGSV…SMSG). Positions 524–536 (QTVSTTDSSTSNR) are enriched in polar residues. One can recognise an SH3 domain in the interval 554 to 615 (PFCGRARVHT…KFIYVDVLSE (62 aa)). Phosphoserine is present on Ser-614. Disordered regions lie at residues 616 to 639 (DEEK…KSVE) and 713 to 810 (DSQG…LNKN). Residues 622–631 (RPTRRRRKGR) show a composition bias toward basic residues. Positions 633 to 697 (PQPKSVEDLL…LTAVELLQEY (65 aa)) constitute an SAM 1 domain. Positions 746 to 765 (SAKSSTEPSLKSFSRNQLGN) are enriched in polar residues. 2 positions are modified to phosphoserine: Ser-821 and Ser-839. 3 disordered regions span residues 846–884 (EPGA…PLEQ), 903–946 (PQKL…LART), and 971–1065 (DAEQ…SELP). A required for interaction with TRAF6 region spans residues 852 to 860 (DVPTEVTEP). The residue at position 858 (Thr-858) is a Phosphothreonine. A compositionally biased stretch (pro residues) spans 1050–1060 (GSPPSTRPPPW). One can recognise an SAM 2 domain in the interval 1177-1241 (GCISSVSDWL…LSAARLFKLP (65 aa)).

In terms of assembly, interacts with GNAS. Interacts with IQGAP1. Interacts with TRAF6 (via C-terminus); the interaction is LPS-dependent. Interacts with MAP3K7, CHUK and IKBKB. In terms of tissue distribution, expressed ubiquitously, with highest levels in lung, placenta, spleen and thymus. Down-regulated in the majority (74%) of breast tumors in comparison with corresponding normal breast epithelial tissues. Expressed in the epidermis, epidermal keratinocytes, dermal fibroblasts and melanocytes.

Its subcellular location is the cytoplasm. Its function is as follows. Is a positive regulator of NF-kappa-B signaling downstream of TLR4 activation. It acts as a scaffold molecule to assemble a molecular complex that includes TRAF6, MAP3K7, CHUK and IKBKB, thereby facilitating NF-kappa-B signaling activation. Regulates TRAF6 and MAP3K7 ubiquitination. Involved in the regulation of cell mobility. Regulates lipolysaccharide (LPS)-induced endothelial cell migration. Is involved in the regulation of skin pigmentation through the control of melanocyte migration in the epidermis. This Homo sapiens (Human) protein is SAM and SH3 domain-containing protein 1 (SASH1).